Here is a 483-residue protein sequence, read N- to C-terminus: Betaine aldehyde dehydrogenase (483 aa).

Residues Ile27 and Asp93 each contribute to the K(+) site. Residue 149-151 coordinates NAD(+); the sequence is GAW. The active-site Charge relay system is Lys161. An NAD(+)-binding site is contributed by 175–178; that stretch reads KPSE. A K(+)-binding site is contributed by Val179. 228-231 serves as a coordination point for NAD(+); sequence SVPT. Val243 is a binding site for K(+). Residue Glu249 is the Proton acceptor of the active site. NAD(+) is bound by residues Gly251, Cys283, and Glu380. Cys283 (nucleophile) is an active-site residue. Residue Cys283 is modified to Cysteine sulfenic acid (-SOH). Residues Lys450 and Gly453 each contribute to the K(+) site. Glu457 serves as the catalytic Charge relay system.

Belongs to the aldehyde dehydrogenase family. In terms of assembly, dimer of dimers. K(+) serves as cofactor.

The enzyme catalyses betaine aldehyde + NAD(+) + H2O = glycine betaine + NADH + 2 H(+). It participates in amine and polyamine biosynthesis; betaine biosynthesis via choline pathway; betaine from betaine aldehyde: step 1/1. Its function is as follows. Involved in the biosynthesis of the osmoprotectant glycine betaine. Catalyzes the irreversible oxidation of betaine aldehyde to the corresponding acid. This chain is Betaine aldehyde dehydrogenase, found in Cereibacter sphaeroides (strain ATCC 17025 / ATH 2.4.3) (Rhodobacter sphaeroides).